The primary structure comprises 967 residues: A disintegrin and metalloproteinase with thrombospondin motifs 1 (967 aa).

The first 54 residues, 1–54 (MQPEVPLGSGKLKPCSDMGDIQRAAKFRSSQSAHMLLLLLASITMLLCVRGAHG), serve as a signal peptide directing secretion. Positions 55–252 (RPTEEDEELV…TGPGSIRKKR (198 aa)) are excised as a propeptide. Positions 198–252 (RGSGGAKCGVMDEETLPTSNSGRESQNTPDQWPLRNPTPQGAGKPTGPGSIRKKR) are disordered. Residues 203 to 210 (AKCGVMDE) carry the Cysteine switch motif. A Zn(2+)-binding site is contributed by Cys205. Positions 213–227 (LPTSNSGRESQNTPD) are enriched in polar residues. The 210-residue stretch at 258–467 (RYVETMLVAD…GHGECLMDKP (210 aa)) folds into the Peptidase M12B domain. Residues Glu261, Asp344, and Asp351 each coordinate Ca(2+). Cystine bridges form between Cys333–Cys385, Cys362–Cys367, Cys379–Cys462, and Cys417–Cys446. His401 is a binding site for Zn(2+). Residue Glu402 is part of the active site. Positions 405 and 411 each coordinate Zn(2+). Cys462 and Asp465 together coordinate Ca(2+). One can recognise a Disintegrin domain in the interval 476-558 (DLPGTLYDAN…TDMKHFATPV (83 aa)). Disulfide bonds link Cys488/Cys511, Cys499/Cys521, Cys506/Cys540, and Cys534/Cys545. An N-linked (GlcNAc...) asparagine glycan is attached at Asn547. The 56-residue stretch at 559–614 (HGSWGPWGPWGDCSRTCGGGVQYTMRECDNPVPKNGGKYCEGKRVRYRSCNIEDCP) folds into the TSP type-1 1 domain. Cystine bridges form between Cys571–Cys608, Cys575–Cys613, and Cys586–Cys598. N-linked (GlcNAc...) asparagine glycans are attached at residues Asn720, Asn764, and Asn782. The segment at 725–857 (KKISGTVTST…PFNAIPTFSE (133 aa)) is spacer. 2 TSP type-1 domains span residues 854-910 (TFSE…LPCP) and 911-967 (RWQV…TQCS). Asn945 carries N-linked (GlcNAc...) asparagine glycosylation.

Requires Zn(2+) as cofactor. Post-translationally, the precursor is cleaved by a furin endopeptidase. Glycosylated. Can be O-fucosylated by POFUT2 on a serine or a threonine residue found within the consensus sequence C1-X(2)-(S/T)-C2-G of the TSP type-1 repeat domains where C1 and C2 are the first and second cysteine residue of the repeat, respectively. Fucosylated repeats can then be further glycosylated by the addition of a beta-1,3-glucose residue by the glucosyltransferase, B3GALTL. Fucosylation mediates the efficient secretion of ADAMTS family members. Can also be C-glycosylated with one or two mannose molecules on tryptophan residues within the consensus sequence W-X-X-W of the TPRs, and N-glycosylated. These other glycosylations can also facilitate secretion.

It localises to the secreted. The protein resides in the extracellular space. Its subcellular location is the extracellular matrix. In terms of biological role, metalloprotease which cleaves aggrecan, a cartilage proteoglycan, at the '1683-Glu-|-Leu-1684' site (within the chondroitin sulfate attachment domain), and may be involved in its turnover. Also cleaves COMP. Has angiogenic inhibitor activity. May play a critical role in follicular rupture. This is A disintegrin and metalloproteinase with thrombospondin motifs 1 (Adamts1) from Rattus norvegicus (Rat).